The following is a 415-amino-acid chain: ATP-dependent Clp protease ATP-binding subunit ClpX (415 aa).

Residues 1–53 enclose the ClpX-type ZB domain; it reads MLRSKGDLVLGCSFCGKKEDERRRIVTGHGVSICNYCVERCAEYLRDRKPSAL. The Zn(2+) site is built by C12, C15, C34, and C37. 118–125 provides a ligand contact to ATP; the sequence is PTGSGKTL.

The protein belongs to the ClpX chaperone family. In terms of assembly, component of the ClpX-ClpP complex. Forms a hexameric ring that, in the presence of ATP, binds to fourteen ClpP subunits assembled into a disk-like structure with a central cavity, resembling the structure of eukaryotic proteasomes.

Functionally, ATP-dependent specificity component of the Clp protease. It directs the protease to specific substrates. Can perform chaperone functions in the absence of ClpP. The polypeptide is ATP-dependent Clp protease ATP-binding subunit ClpX (Treponema pallidum (strain Nichols)).